Here is a 457-residue protein sequence, read N- to C-terminus: ERV-H1 provirus ancestral Env polyprotein (457 aa).

Residues 1 to 35 (MIFAGKAPSNTSTLMKFYSLILYSLLFSFPFLCHP) form the signal peptide. N-linked (GlcNAc...) asparagine glycosylation is found at asparagine 10 and asparagine 47. The CXXC signature appears at 64 to 67 (CWLC). N-linked (GlcNAc...) asparagine glycans are attached at residues asparagine 197, asparagine 222, asparagine 265, asparagine 283, asparagine 352, and asparagine 370. The fusion peptide stretch occupies residues 388–408 (VIPLIPLMFGLGLSASTIALS).

This sequence belongs to the gamma type-C retroviral envelope protein family. HERV class-I H env subfamily. In terms of assembly, the surface (SU) and transmembrane (TM) proteins form a heterodimer. SU and TM are attached by noncovalent interactions or by a labile interchain disulfide bond. Specific enzymatic cleavages in vivo yield the mature SU and TM proteins. In terms of processing, the CXXC motif is highly conserved across a broad range of retroviral envelope proteins. It is thought to participate in the formation of a labile disulfide bond possibly with the CX6CC motif present in the transmembrane protein.

Its subcellular location is the virion. Functionally, retroviral envelope proteins mediate receptor recognition and membrane fusion during early infection. Endogenous envelope proteins may have kept, lost or modified their original function during evolution. SU mediates receptor recognition. Its function is as follows. TM anchors the envelope heterodimer to the viral membrane through one transmembrane domain. The other hydrophobic domain, called fusion peptide, mediates fusion of the viral membrane with the target cell membrane. This is ERV-H1 provirus ancestral Env polyprotein from Pan troglodytes (Chimpanzee).